Here is a 300-residue protein sequence, read N- to C-terminus: UPF0282 protein TGAM_0379 (300 aa).

It belongs to the UPF0282 family.

This is UPF0282 protein TGAM_0379 from Thermococcus gammatolerans (strain DSM 15229 / JCM 11827 / EJ3).